The chain runs to 427 residues: uncharacterized protein (427 aa).

3 helical membrane passes run 10–30, 43–63, and 71–91; these read LAYL…AGFW, KIIS…SKLA, and IFEI…SFIS. Phosphothreonine is present on Thr-199. Ser-234 is modified (phosphoserine). Helical transmembrane passes span 253-273, 288-308, 327-347, 358-378, and 397-417; these read NLNP…IGPL, FAEA…VVLG, LLIG…LPII, ILDD…PPAI, and ILFW…VSGA.

The protein belongs to the auxin efflux carrier (TC 2.A.69) family.

It localises to the membrane. This is an uncharacterized protein from Saccharomyces cerevisiae (strain ATCC 204508 / S288c) (Baker's yeast).